The chain runs to 261 residues: Polyamine aminopropyltransferase (261 aa).

The 219-residue stretch at 1–219 (MHPFRRRVRP…AVMAFRQSPS (219 aa)) folds into the PABS domain. S-methyl-5'-thioadenosine-binding positions include aspartate 96 and 124–125 (DG). Aspartate 142 acts as the Proton acceptor in catalysis.

It belongs to the spermidine/spermine synthase family. As to quaternary structure, homodimer or homotetramer.

The protein resides in the cytoplasm. The enzyme catalyses S-adenosyl 3-(methylsulfanyl)propylamine + putrescine = S-methyl-5'-thioadenosine + spermidine + H(+). It participates in amine and polyamine biosynthesis; spermidine biosynthesis; spermidine from putrescine: step 1/1. Its function is as follows. Catalyzes the irreversible transfer of a propylamine group from the amino donor S-adenosylmethioninamine (decarboxy-AdoMet) to putrescine (1,4-diaminobutane) to yield spermidine. In Chromobacterium violaceum (strain ATCC 12472 / DSM 30191 / JCM 1249 / CCUG 213 / NBRC 12614 / NCIMB 9131 / NCTC 9757 / MK), this protein is Polyamine aminopropyltransferase.